Reading from the N-terminus, the 713-residue chain is Cyclomaltodextrin glucanotransferase (713 aa).

A signal peptide spans 1–27 (MKKFLKSTAALALGLSLTFGLFSPAQA). Residues 28-165 (APDTSVSNKQ…NIKVIIDFAP (138 aa)) are A1. Positions 54, 56, 59, and 60 each coordinate Ca(2+). The cysteines at positions 70 and 77 are disulfide-linked. Ca(2+)-binding residues include G78 and D80. 127–128 (YW) contacts substrate. N166 contributes to the Ca(2+) binding site. The tract at residues 166 to 229 (NHTSPASSDQ…NLYDLADLNH (64 aa)) is b. Substrate contacts are provided by residues H167 and 172–174 (SSD). Residue I217 coordinates Ca(2+). 220-223 (NLYD) lines the substrate pocket. D226 contributes to the Ca(2+) binding site. The segment at 230–433 (NNSTVDVYLK…LRKCNPAIAY (204 aa)) is A2. R254 contributes to the substrate binding site. D256 functions as the Nucleophile in the catalytic mechanism. 259–260 (KH) contributes to the substrate binding site. H260 contributes to the Ca(2+) binding site. E284 serves as the catalytic Proton donor. A342 contributes to the Ca(2+) binding site. The substrate site is built by H354, D398, and R402. Residues 434 to 522 (GSTQERWINN…GTAVWQYTAA (89 aa)) are c. A d region spans residues 523 to 609 (TATPTIGHVG…SNVYDNFEVL (87 aa)). One can recognise an IPT/TIG domain in the interval 526 to 607 (PTIGHVGPMM…TASNVYDNFE (82 aa)). D604 provides a ligand contact to Ca(2+). The 106-residue stretch at 608–713 (VLSGDQVSVR…TATINVNWQP (106 aa)) folds into the CBM20 domain. The segment at 610 to 713 (SGDQVSVRFV…TATINVNWQP (104 aa)) is e.

It belongs to the glycosyl hydrolase 13 family. Monomer. It depends on Ca(2+) as a cofactor.

It localises to the secreted. The catalysed reaction is Cyclizes part of a (1-&gt;4)-alpha-D-glucan chain by formation of a (1-&gt;4)-alpha-D-glucosidic bond.. The polypeptide is Cyclomaltodextrin glucanotransferase (cgt) (Niallia circulans (Bacillus circulans)).